A 300-amino-acid chain; its full sequence is Ribosomal RNA small subunit methyltransferase H (300 aa).

S-adenosyl-L-methionine is bound by residues 46-48 (GGH), D65, F92, D107, and Q114.

This sequence belongs to the methyltransferase superfamily. RsmH family.

Its subcellular location is the cytoplasm. It catalyses the reaction cytidine(1402) in 16S rRNA + S-adenosyl-L-methionine = N(4)-methylcytidine(1402) in 16S rRNA + S-adenosyl-L-homocysteine + H(+). Functionally, specifically methylates the N4 position of cytidine in position 1402 (C1402) of 16S rRNA. The protein is Ribosomal RNA small subunit methyltransferase H of Prochlorococcus marinus (strain MIT 9515).